Here is a 230-residue protein sequence, read N- to C-terminus: Ribose-5-phosphate isomerase A (230 aa).

Substrate is bound by residues 28 to 31 (TGST), 83 to 86 (DGAD), and 97 to 100 (KGLG). E106 serves as the catalytic Proton acceptor. Residue K124 participates in substrate binding.

This sequence belongs to the ribose 5-phosphate isomerase family. In terms of assembly, homodimer.

It carries out the reaction aldehydo-D-ribose 5-phosphate = D-ribulose 5-phosphate. It participates in carbohydrate degradation; pentose phosphate pathway; D-ribose 5-phosphate from D-ribulose 5-phosphate (non-oxidative stage): step 1/1. Its function is as follows. Catalyzes the reversible conversion of ribose-5-phosphate to ribulose 5-phosphate. This Gloeobacter violaceus (strain ATCC 29082 / PCC 7421) protein is Ribose-5-phosphate isomerase A.